Consider the following 223-residue polypeptide: Endonuclease V (223 aa).

Residues D35 and D103 each contribute to the Mg(2+) site.

This sequence belongs to the endonuclease V family. Mg(2+) serves as cofactor.

The protein localises to the cytoplasm. It catalyses the reaction Endonucleolytic cleavage at apurinic or apyrimidinic sites to products with a 5'-phosphate.. Functionally, DNA repair enzyme involved in the repair of deaminated bases. Selectively cleaves double-stranded DNA at the second phosphodiester bond 3' to a deoxyinosine leaving behind the intact lesion on the nicked DNA. This Shigella flexneri serotype 5b (strain 8401) protein is Endonuclease V.